A 565-amino-acid chain; its full sequence is Inositol-3-phosphate synthase (565 aa).

The NAD(+) site is built by G70, G71, N72, N73, D144, S180, I181, Q191, R194, T231, A232, N233, T234, G282, S283, D307, S310, N341, N342, D343, K356, G394, D395, D423, and S424. S536 bears the Phosphoserine mark. Residues 546 to 565 form a disordered region; sequence LHANGHSNGSAKLATNGNGH. The span at 550–565 shows a compositional bias: polar residues; the sequence is GHSNGSAKLATNGNGH.

It belongs to the myo-inositol 1-phosphate synthase family. NAD(+) is required as a cofactor. In terms of tissue distribution, higher expression in adult heads than bodies.

It localises to the cytoplasm. It catalyses the reaction D-glucose 6-phosphate = 1D-myo-inositol 3-phosphate. The protein operates within polyol metabolism; myo-inositol biosynthesis; myo-inositol from D-glucose 6-phosphate: step 1/2. Key enzyme in myo-inositol biosynthesis pathway that catalyzes the conversion of glucose 6-phosphate to 1-myo-inositol 1-phosphate in a NAD-dependent manner. Rate-limiting enzyme in the synthesis of all inositol-containing compounds. This Drosophila melanogaster (Fruit fly) protein is Inositol-3-phosphate synthase (Inos).